The following is a 698-amino-acid chain: Dual trans-enoyl reductase/FAD-dependent monooxygenase tazHJ (698 aa).

NADP(+) contacts are provided by residues 54–57, 78–81, Tyr-96, and 279–280; these read STAT, SPRH, and IA. 3 residues coordinate FAD: Glu-299, Gly-312, and Arg-372. The active site involves Arg-455. Residues Asp-571 and Ala-584 each contribute to the FAD site.

The protein in the N-terminal section; belongs to the zinc-containing alcohol dehydrogenase family. This sequence in the C-terminal section; belongs to the paxM FAD-dependent monooxygenase family.

Its pathway is secondary metabolite biosynthesis. Its function is as follows. Dual trans-enoyl reductase/FAD-dependent monooxygenase; part of the gene cluster that mediates the biosynthesis of azaterrilone A and other azaphilones, a class of fungal metabolites characterized by a highly oxygenated pyrano-quinone bicyclic core and exhibiting a broad range of bioactivities. The first step of the pathway begins with the non-reducing polyketide synthase tazA that assembles one acetyl-CoA starter unit, five malonyl-CoA units, and catalyzes a series of Claisen condensations, methylation, PT-mediated cyclization, and finally releases the first hexaketide precursor through the R-domain. The tazA product then undergoes reduction on its terminal ketone and the following pyran-ring formation by yet undetermined enzyme(s). Dehydration and enoyl reduction, possibly involving the trans-enoyl reductase tazE leads to the next intermediate. TazD is predicted as an acetyltransferase and might catalyze the acetylation steps leading to the synthesis of azaterrilone A. Azaterrilone A is not the final product of the taz pathway and both the highly reducing polyketide synthase tazB and the dual enzyme tazHJ catalyze late steps of the pathway, leading to the production of the 2 final stereoisomers that contain additional polyketide modification whose structures have still to be determined. This is Dual trans-enoyl reductase/FAD-dependent monooxygenase tazHJ from Aspergillus terreus (strain NIH 2624 / FGSC A1156).